Reading from the N-terminus, the 129-residue chain is Acetophenone carboxylase beta subunit (129 aa).

In terms of assembly, acetophenone carboxylase consists of five subunits; a heterooctameric subcomplex of two alpha (Apc1), two beta (Apc2), two gamma (Apc3) and two delta (Apc4) subunits assembles with the epsilon (Apc5) subunit in an unknown stoichiometry. The cofactor is Mg(2+). Mn(2+) is required as a cofactor.

The protein localises to the cytoplasm. The catalysed reaction is acetophenone + hydrogencarbonate + 2 ATP + H2O = 3-oxo-3-phenylpropanoate + 2 ADP + 2 phosphate + 2 H(+). With respect to regulation, inhibited by zinc ions, carbamoylphosphate and beta,gamma-imido-ATP. Functionally, catalyzes the carboxylation of acetophenone to form 3-oxo-3-phenylpropanoate (benzoylacetate) in the anaerobic catabolism of ethylbenzene. Also carboxylates propiophenone at the same rate and 4-acetyl-pyridine at lower rates. This Aromatoleum aromaticum (strain DSM 19018 / LMG 30748 / EbN1) (Azoarcus sp. (strain EbN1)) protein is Acetophenone carboxylase beta subunit (apc2).